Here is a 497-residue protein sequence, read N- to C-terminus: Probable cytosol aminopeptidase (497 aa).

K267 and D272 together coordinate Mn(2+). Residue K279 is part of the active site. D290, D349, and E351 together coordinate Mn(2+). Residue R353 is part of the active site.

Belongs to the peptidase M17 family. It depends on Mn(2+) as a cofactor.

The protein resides in the cytoplasm. The catalysed reaction is Release of an N-terminal amino acid, Xaa-|-Yaa-, in which Xaa is preferably Leu, but may be other amino acids including Pro although not Arg or Lys, and Yaa may be Pro. Amino acid amides and methyl esters are also readily hydrolyzed, but rates on arylamides are exceedingly low.. The enzyme catalyses Release of an N-terminal amino acid, preferentially leucine, but not glutamic or aspartic acids.. Presumably involved in the processing and regular turnover of intracellular proteins. Catalyzes the removal of unsubstituted N-terminal amino acids from various peptides. This is Probable cytosol aminopeptidase from Nitrosomonas europaea (strain ATCC 19718 / CIP 103999 / KCTC 2705 / NBRC 14298).